A 371-amino-acid polypeptide reads, in one-letter code: Protein NDRG2 (371 aa).

A disordered region spans residues 1-22; sequence MAELQEVQITEEKPLLPGQTPE. At Ala-2 the chain carries N-acetylalanine. Position 20 is a phosphothreonine (Thr-20). Ser-326 and Ser-328 each carry phosphoserine. Phosphothreonine is present on Thr-330. Ser-332 carries the post-translational modification Phosphoserine. Thr-334 carries the post-translational modification Phosphothreonine. A disordered region spans residues 334 to 371; it reads TSAASIDGSRSRSRTLSQSSESGTLPSGPPGHTMEVSC. 3 positions are modified to phosphoserine: Ser-335, Ser-338, and Ser-344. Thr-348 carries the post-translational modification Phosphothreonine. 4 positions are modified to phosphoserine: Ser-350, Ser-352, Ser-353, and Ser-355. Thr-357 carries the phosphothreonine modification. Ser-370 carries the post-translational modification Phosphoserine.

It belongs to the NDRG family. As to expression, broadly expressed, with highest levels in heart, liver, skeletal muscle and aorta.

The protein resides in the cytoplasm. It localises to the perinuclear region. It is found in the cell projection. The protein localises to the growth cone. In terms of biological role, contributes to the regulation of the Wnt signaling pathway. Down-regulates CTNNB1-mediated transcriptional activation of target genes, such as CCND1, and may thereby act as tumor suppressor. May be involved in dendritic cell and neuron differentiation. The sequence is that of Protein NDRG2 (Ndrg2) from Rattus norvegicus (Rat).